The chain runs to 513 residues: ATP synthase subunit alpha 1 (513 aa).

Position 169–176 (169–176) interacts with ATP; sequence GDRQCGKT.

The protein belongs to the ATPase alpha/beta chains family. As to quaternary structure, F-type ATPases have 2 components, CF(1) - the catalytic core - and CF(0) - the membrane proton channel. CF(1) has five subunits: alpha(3), beta(3), gamma(1), delta(1), epsilon(1). CF(0) has three main subunits: a(1), b(2) and c(9-12). The alpha and beta chains form an alternating ring which encloses part of the gamma chain. CF(1) is attached to CF(0) by a central stalk formed by the gamma and epsilon chains, while a peripheral stalk is formed by the delta and b chains.

Its subcellular location is the cell inner membrane. The enzyme catalyses ATP + H2O + 4 H(+)(in) = ADP + phosphate + 5 H(+)(out). Its function is as follows. Produces ATP from ADP in the presence of a proton gradient across the membrane. The alpha chain is a regulatory subunit. The sequence is that of ATP synthase subunit alpha 1 from Burkholderia thailandensis (strain ATCC 700388 / DSM 13276 / CCUG 48851 / CIP 106301 / E264).